Consider the following 1453-residue polypeptide: Collagen alpha-1(I) chain (1453 aa).

The first 22 residues, 1–22 (MFSFVDSRLLLLIAATVLLTRG), serve as a signal peptide directing secretion. A propeptide spans 23–151 (EGEEDIQTGS…PPGLGGNFAP (129 aa)) (N-terminal propeptide). In terms of domain architecture, VWFC spans 31-89 (GSCVQDGLTYNDKDVWKPEPCQICVCDSGNILCDEVICEDTSDCPNAEIPFGECCPICP). Positions 98-1203 (PESAGVEGPK…PQEKAHDGGR (1106 aa)) are disordered. A compositionally biased stretch (basic and acidic residues) spans 106 to 116 (PKGDTGPRGDR). The segment covering 131-143 (PGLPGPPGPPGPP) has biased composition (pro residues). Gln-152 carries the pyrrolidone carboxylic acid modification. Lys-160 carries the post-translational modification Allysine. The segment covering 162–176 (AGVAVPGPMGPAGPR) has biased composition (low complexity). Pro-179, Pro-182, Pro-185, Pro-194, Pro-197, Pro-200, Pro-215, Pro-230, Pro-236, Pro-245, and Pro-251 each carry 4-hydroxyproline. Residues 187-206 (PQGFQGPPGEPGEPGASGPM) are compositionally biased toward low complexity. 5-hydroxylysine; alternate is present on Lys-254. Lys-254 carries an O-linked (Gal...) hydroxylysine; partial glycan. Over residues 265–284 (AKGQPGPAGPKGEPGSPGEN) the composition is skewed to low complexity. Pro-269, Pro-278, Pro-281, Pro-287, Pro-296, Pro-302, Pro-317, Pro-323, Pro-332, and Pro-335 each carry 4-hydroxyproline. The segment covering 307–319 (PAGARGNDGAPGA) has biased composition (low complexity). Positions 320–334 (AGPPGPTGPAGPPGF) are enriched in pro residues. A compositionally biased stretch (low complexity) spans 350 to 361 (RGSEGPQGSRGE). 4-hydroxyproline occurs at positions 362, 365, 377, 383, 392, 398, 401, and 416. Residues 368-418 (AGAAGPAGNPGADGQPGAKGATGAPGIAGAPGFPGARGPSGPQGPSGAPGP) are compositionally biased toward low complexity. A 5-hydroxylysine modification is found at Lys-419. 8 positions are modified to 4-hydroxyproline: Pro-425, Pro-428, Pro-440, Pro-449, Pro-464, Pro-470, Pro-479, and Pro-485. A compositionally biased stretch (low complexity) spans 463–482 (EPGPAGLPGPAGERGAPGSR). Lys-494 carries the 5-hydroxylysine modification. 31 positions are modified to 4-hydroxyproline: Pro-497, Pro-503, Pro-512, Pro-518, Pro-524, Pro-533, Pro-536, Pro-545, Pro-554, Pro-560, Pro-572, Pro-581, Pro-584, Pro-590, Pro-593, Pro-611, Pro-629, Pro-635, Pro-641, Pro-647, Pro-653, Pro-659, Pro-671, Pro-680, Pro-692, Pro-704, Pro-707, Pro-713, Pro-719, Pro-728, and Pro-737. Residues 527 to 581 (KGLTGSPGSPGPDGKTGPPGPAGQDGRPGPAGPPGARGQAGVMGFPGPKGAAGEP) show a composition bias toward low complexity. Residues 623 to 664 (QGPAGAPGFQGLPGPAGPPGEAGKPGEQGVPGNAGAPGPAGA) show a composition bias toward low complexity. The segment covering 685–722 (PRGANGAPGNDGAKGDAGAPGAPGNEGPPGLEGMPGER) has biased composition (low complexity). Residue Lys-740 is modified to 5-hydroxylysine. Pro-746, Pro-761, Pro-767, Pro-776, Pro-788, Pro-794, Pro-797, Pro-806, Pro-812, Pro-830, Pro-839, and Pro-848 each carry 4-hydroxyproline. Low complexity predominate over residues 800–827 (AGFAGPPGADGQPGAKGETGDAGAKGDA). A compositionally biased stretch (low complexity) spans 835-883 (PTGAPGPAGZVGAPGPKGARGSAGPPGATGFPGAAGRVGPPGPSGNIGL). 5-hydroxylysine is present on Lys-851. 2 positions are modified to 4-hydroxyproline: Pro-860 and Pro-866. Pro-874 is subject to 3-hydroxyproline. 4-hydroxyproline is present on residues Pro-875, Pro-884, Pro-887, Pro-908, Pro-911, Pro-917, Pro-920, Pro-926, Pro-935, Pro-953, Pro-962, Pro-965, Pro-971, Pro-986, Pro-992, Pro-998, Pro-1007, and Pro-1013. The span at 890–908 (AGKZGSKGPRGETGPAGRP) shows a compositional bias: low complexity. Residues 910–920 (EPGPAGPPGPP) are compositionally biased toward pro residues. Positions 985-995 (PPGPMGPPGLA) are enriched in pro residues. Low complexity predominate over residues 997-1021 (PPGEAGREGAPGAEGAPGRDGAAGP). The residue at position 1022 (Lys-1022) is a 5-hydroxylysine; partial. The segment covering 1031–1046 (AGPPGAPGAPGAPGPV) has biased composition (pro residues). Residues Pro-1034, Pro-1037, Pro-1040, and Pro-1067 each carry the 4-hydroxyproline modification. Residues 1070–1081 (AGARGPAGPQGP) show a composition bias toward low complexity. Residues 1082 to 1096 (RGDKGETGEQGDRGM) show a composition bias toward basic and acidic residues. A 5-hydroxylysine; partial modification is found at Lys-1085. Lys-1097 is modified (5-hydroxylysine; alternate). A glycan (O-linked (Gal...) hydroxylysine; partial) is linked at Lys-1097. 4-hydroxyproline is present on residues Pro-1109, Pro-1112, Pro-1115, Pro-1133, and Pro-1148. The span at 1115–1139 (PGEQGPSGASGPAGPRGPPGSAGAA) shows a compositional bias: low complexity. Pro-1153 is subject to 3-hydroxyproline. Pro-1154 is modified (4-hydroxyproline). Over residues 1166 to 1181 (VGPPGPPGPPGPPGPP) the composition is skewed to pro residues. At Pro-1168 the chain carries 3-hydroxyproline. Pro-1169 bears the 4-hydroxyproline mark. Pro-1171 bears the 3-hydroxyproline mark. Position 1172 is a 4-hydroxyproline (Pro-1172). Pro-1174 carries the post-translational modification 3-hydroxyproline. 4-hydroxyproline is present on residues Pro-1175, Pro-1178, and Pro-1181. Lys-1197 is subject to Allysine. A propeptide spans 1208–1453 (DDANVMRDRD…GIDIGPVCFL (246 aa)) (C-terminal propeptide). A Fibrillar collagen NC1 domain is found at 1218 to 1453 (LEVDTTLKSL…GIDIGPVCFL (236 aa)). 3 disulfides stabilise this stretch: Cys-1248/Cys-1280, Cys-1288/Cys-1451, and Cys-1359/Cys-1404. The Ca(2+) site is built by Asp-1266, Asn-1268, Gln-1269, Cys-1271, and Asp-1274. N-linked (GlcNAc...) asparagine glycosylation is present at Asn-1354.

The protein belongs to the fibrillar collagen family. As to quaternary structure, trimers of one alpha 2(I) and two alpha 1(I) chains. In terms of processing, contains mostly 4-hydroxyproline. Proline residues at the third position of the tripeptide repeating unit (G-X-Y) are 4-hydroxylated in some or all of the chains. Post-translationally, contains 3-hydroxyproline. This modification occurs on the first proline residue in the sequence motif Gly-Pro-Hyp, where Hyp is 4-hydroxyproline. Lysine residues at the third position of the tripeptide repeating unit (G-X-Y) are 5-hydroxylated in some or all of the chains. In terms of processing, O-glycosylated on hydroxylated lysine residues. The O-linked glycan consists of a Glc-Gal disaccharide. Forms the fibrils of tendon, ligaments and bones. In bones the fibrils are mineralized with calcium hydroxyapatite.

The protein localises to the secreted. The protein resides in the extracellular space. It localises to the extracellular matrix. Type I collagen is a member of group I collagen (fibrillar forming collagen). This chain is Collagen alpha-1(I) chain (COL1A1), found in Gallus gallus (Chicken).